We begin with the raw amino-acid sequence, 679 residues long: DNA ligase (679 aa).

NAD(+) contacts are provided by residues 36–40 and 94–95; these read DEYYD and SL. Lysine 126 serves as the catalytic N6-AMP-lysine intermediate. Positions 147, 181, 299, and 323 each coordinate NAD(+). Zn(2+) is bound by residues cysteine 415, cysteine 418, cysteine 433, and cysteine 438. The BRCT domain maps to 603–679; it reads IQSTKLENKT…DEEFLKKMLE (77 aa).

Belongs to the NAD-dependent DNA ligase family. LigA subfamily. It depends on Mg(2+) as a cofactor. Mn(2+) serves as cofactor.

The catalysed reaction is NAD(+) + (deoxyribonucleotide)n-3'-hydroxyl + 5'-phospho-(deoxyribonucleotide)m = (deoxyribonucleotide)n+m + AMP + beta-nicotinamide D-nucleotide.. DNA ligase that catalyzes the formation of phosphodiester linkages between 5'-phosphoryl and 3'-hydroxyl groups in double-stranded DNA using NAD as a coenzyme and as the energy source for the reaction. It is essential for DNA replication and repair of damaged DNA. The protein is DNA ligase of Mycoplasmopsis pulmonis (strain UAB CTIP) (Mycoplasma pulmonis).